We begin with the raw amino-acid sequence, 96 residues long: MDALKEVYSTIEKRIKEKPEGSYVVKLTTNDKKTAVNKICEKIGEEAAETILAAKDNDKSEIIYESADLIFHTFVLLAKFGISYEELNEEFKKRMK.

It belongs to the PRA-PH family.

Its subcellular location is the cytoplasm. It catalyses the reaction 1-(5-phospho-beta-D-ribosyl)-ATP + H2O = 1-(5-phospho-beta-D-ribosyl)-5'-AMP + diphosphate + H(+). It participates in amino-acid biosynthesis; L-histidine biosynthesis; L-histidine from 5-phospho-alpha-D-ribose 1-diphosphate: step 2/9. The chain is Phosphoribosyl-ATP pyrophosphatase from Methanococcus vannielii (strain ATCC 35089 / DSM 1224 / JCM 13029 / OCM 148 / SB).